Reading from the N-terminus, the 642-residue chain is Threonine--tRNA ligase (642 aa).

The TGS domain occupies M1–T61. The catalytic stretch occupies residues D243–P534. Position 286 is an N6-acetyllysine (K286). Residues C334, H385, and H511 each coordinate Zn(2+).

It belongs to the class-II aminoacyl-tRNA synthetase family. Homodimer. The cofactor is Zn(2+).

The protein localises to the cytoplasm. It carries out the reaction tRNA(Thr) + L-threonine + ATP = L-threonyl-tRNA(Thr) + AMP + diphosphate + H(+). Catalyzes the attachment of threonine to tRNA(Thr) in a two-step reaction: L-threonine is first activated by ATP to form Thr-AMP and then transferred to the acceptor end of tRNA(Thr). Also edits incorrectly charged L-seryl-tRNA(Thr). The sequence is that of Threonine--tRNA ligase from Shigella dysenteriae serotype 1 (strain Sd197).